A 175-amino-acid polypeptide reads, in one-letter code: Large ribosomal subunit protein uL10 (175 aa).

It belongs to the universal ribosomal protein uL10 family. In terms of assembly, part of the ribosomal stalk of the 50S ribosomal subunit. The N-terminus interacts with L11 and the large rRNA to form the base of the stalk. The C-terminus forms an elongated spine to which L12 dimers bind in a sequential fashion forming a multimeric L10(L12)X complex.

Its function is as follows. Forms part of the ribosomal stalk, playing a central role in the interaction of the ribosome with GTP-bound translation factors. This chain is Large ribosomal subunit protein uL10, found in Xylella fastidiosa (strain M12).